A 498-amino-acid polypeptide reads, in one-letter code: MRINPTISGPGVSTLEEKNLGRVAQIIGPVLDVAFPPGKMPNIYNALVVKGRDTVGQQINVTCEVQQLLGNNRVRAVAMSATDGLTRGLEVIDTGAPLSVPVGGATLGRIFNVLGEPVDNLGPVDTRTTSPIHRSAPAFIQLDTKLSIFETGIKVVDLLAPYRRGGKIGLFGGAGVGKTVLIMELINNIAKAHGGVSVFGGVGERTREGNDLYMEMKESGVINEQNIAESKVALVYGQMNEPPGARMRVGLTALTMAEYFRDVNEQDVLLFIDNIFRFVQAGSEVSALLGRMPSAVGYQPTLSTEMGSLQERITSTKEGSITSIQAVYVPADDLTDPAPATTFAHLDATTVLSRGLAAKGIYPAVDPLDSTSTMLQPRIVGEEHYETAQRVKQTLQRYKELQDIIAILGLDELSEEDRLTVARARKIERFLSQPFFVAEVFTGSPGKYVGLAETIRGFQLILSGELDGLPEQAFYLVGNIDEATAKAMNLEVESKLKK.

172 to 179 (GGAGVGKT) contributes to the ATP binding site.

It belongs to the ATPase alpha/beta chains family. As to quaternary structure, F-type ATPases have 2 components, CF(1) - the catalytic core - and CF(0) - the membrane proton channel. CF(1) has five subunits: alpha(3), beta(3), gamma(1), delta(1), epsilon(1). CF(0) has four main subunits: a(1), b(1), b'(1) and c(9-12).

Its subcellular location is the plastid. The protein resides in the chloroplast thylakoid membrane. The catalysed reaction is ATP + H2O + 4 H(+)(in) = ADP + phosphate + 5 H(+)(out). Its function is as follows. Produces ATP from ADP in the presence of a proton gradient across the membrane. The catalytic sites are hosted primarily by the beta subunits. This chain is ATP synthase subunit beta, chloroplastic, found in Trochodendron aralioides (Wheel tree).